The primary structure comprises 543 residues: Protein MGF 505-10R (543 aa).

This sequence belongs to the asfivirus MGF 505 family.

Its function is as follows. Plays a role in virus cell tropism, and may be required for efficient virus replication in macrophages. The protein is Protein MGF 505-10R of African swine fever virus (isolate Warthog/Namibia/Wart80/1980) (ASFV).